Reading from the N-terminus, the 171-residue chain is Peptide methionine sulfoxide reductase MsrA (171 aa).

The active site involves Cys-13.

The protein belongs to the MsrA Met sulfoxide reductase family.

The catalysed reaction is L-methionyl-[protein] + [thioredoxin]-disulfide + H2O = L-methionyl-(S)-S-oxide-[protein] + [thioredoxin]-dithiol. The enzyme catalyses [thioredoxin]-disulfide + L-methionine + H2O = L-methionine (S)-S-oxide + [thioredoxin]-dithiol. Functionally, has an important function as a repair enzyme for proteins that have been inactivated by oxidation. Catalyzes the reversible oxidation-reduction of methionine sulfoxide in proteins to methionine. The protein is Peptide methionine sulfoxide reductase MsrA of Mycolicibacterium paratuberculosis (strain ATCC BAA-968 / K-10) (Mycobacterium paratuberculosis).